The following is a 1892-amino-acid chain: Kinesin-like protein KIN-12E (1892 aa).

Residues 1-28 (MAGHGAGGRRASTSRAAARRVEAETNEN) are disordered. Residues 64–401 (NVQVLIRIRP…LKFAQRAKLI (338 aa)) enclose the Kinesin motor domain. Residue 145-152 (GQTGSGKT) participates in ATP binding. Coiled-coil stretches lie at residues 406 to 438 (KVNEDASGDVMSLQRQIEDLKDQLTCLKKQQNM), 486 to 526 (SLRR…TTVK), 1066 to 1139 (LFSN…LHEQ), 1303 to 1357 (KLLQ…LAEN), and 1396 to 1528 (ISET…SYQI). Residues 1633 to 1649 (LHESNSDTGHTKFEKPS) are compositionally biased toward basic and acidic residues. A disordered region spans residues 1633–1656 (LHESNSDTGHTKFEKPSGRTRGSG). Residues 1780–1841 (MDQRKADLLE…LVGSNQAIAE (62 aa)) adopt a coiled-coil conformation. Residues 1870–1892 (HARHEHSRLQAAKSSRTRRGSHQ) form a disordered region.

It belongs to the TRAFAC class myosin-kinesin ATPase superfamily. Kinesin family. KIN-12 subfamily.

In Oryza sativa subsp. japonica (Rice), this protein is Kinesin-like protein KIN-12E.